The sequence spans 755 residues: Photosystem I P700 chlorophyll a apoprotein A1 (755 aa).

8 helical membrane-spanning segments follow: residues 72–95, 158–181, 197–221, 297–315, 352–375, 391–417, 439–461, and 536–554; these read IFSA…FHGA, LYCT…FHYH, LNHH…HVSL, TAHH…GHMY, WHAQ…QHMY, LSLF…IFMV, AIIS…LYVH, and FMVH…LILL. 2 residues coordinate [4Fe-4S] cluster: C578 and C587. 2 helical membrane passes run 594 to 615 and 669 to 691; these read HVFL…HFSW and LSAY…MFLF. Residue H680 coordinates chlorophyll a'. Chlorophyll a-binding residues include M688 and Y696. Residue W697 coordinates phylloquinone. A helical transmembrane segment spans residues 729-749; the sequence is AVGVAHYLLGGIATTWAFFLA.

The protein belongs to the PsaA/PsaB family. As to quaternary structure, the PsaA/B heterodimer binds the P700 chlorophyll special pair and subsequent electron acceptors. PSI consists of a core antenna complex that captures photons, and an electron transfer chain that converts photonic excitation into a charge separation. The cyanobacterial PSI reaction center is composed of one copy each of PsaA,B,C,D,E,F,I,J,K,L,M and X, and forms trimeric complexes. PSI electron transfer chain: 5 chlorophyll a, 1 chlorophyll a', 2 phylloquinones and 3 4Fe-4S clusters. PSI core antenna: 90 chlorophyll a, 22 carotenoids, 3 phospholipids and 1 galactolipid. P700 is a chlorophyll a/chlorophyll a' dimer, A0 is one or more chlorophyll a, A1 is one or both phylloquinones and FX is a shared 4Fe-4S iron-sulfur center. serves as cofactor.

Its subcellular location is the cellular thylakoid membrane. It carries out the reaction reduced [plastocyanin] + hnu + oxidized [2Fe-2S]-[ferredoxin] = oxidized [plastocyanin] + reduced [2Fe-2S]-[ferredoxin]. PsaA and PsaB bind P700, the primary electron donor of photosystem I (PSI), as well as the electron acceptors A0, A1 and FX. PSI is a plastocyanin/cytochrome c6-ferredoxin oxidoreductase, converting photonic excitation into a charge separation, which transfers an electron from the donor P700 chlorophyll pair to the spectroscopically characterized acceptors A0, A1, FX, FA and FB in turn. Oxidized P700 is reduced on the lumenal side of the thylakoid membrane by plastocyanin or cytochrome c6. This is Photosystem I P700 chlorophyll a apoprotein A1 from Thermostichus vulcanus (Synechococcus vulcanus).